Consider the following 365-residue polypeptide: Peptide chain release factor 2 (365 aa).

Glutamine 252 carries the post-translational modification N5-methylglutamine.

It belongs to the prokaryotic/mitochondrial release factor family. Methylated by PrmC. Methylation increases the termination efficiency of RF2.

Its subcellular location is the cytoplasm. In terms of biological role, peptide chain release factor 2 directs the termination of translation in response to the peptide chain termination codons UGA and UAA. The chain is Peptide chain release factor 2 from Escherichia coli (strain K12 / MC4100 / BW2952).